The sequence spans 455 residues: Probable glycine dehydrogenase (decarboxylating) subunit 1 (455 aa).

This sequence belongs to the GcvP family. N-terminal subunit subfamily. The glycine cleavage system is composed of four proteins: P, T, L and H. In this organism, the P 'protein' is a heterodimer of two subunits.

The enzyme catalyses N(6)-[(R)-lipoyl]-L-lysyl-[glycine-cleavage complex H protein] + glycine + H(+) = N(6)-[(R)-S(8)-aminomethyldihydrolipoyl]-L-lysyl-[glycine-cleavage complex H protein] + CO2. Functionally, the glycine cleavage system catalyzes the degradation of glycine. The P protein binds the alpha-amino group of glycine through its pyridoxal phosphate cofactor; CO(2) is released and the remaining methylamine moiety is then transferred to the lipoamide cofactor of the H protein. This chain is Probable glycine dehydrogenase (decarboxylating) subunit 1, found in Francisella philomiragia subsp. philomiragia (strain ATCC 25017 / CCUG 19701 / FSC 153 / O#319-036).